Reading from the N-terminus, the 159-residue chain is Major latex protein 146 (159 aa).

The protein belongs to the MLP family. In terms of tissue distribution, laticifer.

It localises to the vacuole. The protein resides in the cytoplasmic vesicle. Not known; MLPs constitute up to 50% of the soluble latex protein. This is Major latex protein 146 (MLP146) from Papaver somniferum (Opium poppy).